A 1024-amino-acid polypeptide reads, in one-letter code: Error-prone DNA polymerase (1024 aa).

It belongs to the DNA polymerase type-C family. DnaE2 subfamily.

It localises to the cytoplasm. It carries out the reaction DNA(n) + a 2'-deoxyribonucleoside 5'-triphosphate = DNA(n+1) + diphosphate. DNA polymerase involved in damage-induced mutagenesis and translesion synthesis (TLS). It is not the major replicative DNA polymerase. The polypeptide is Error-prone DNA polymerase (Vibrio vulnificus (strain YJ016)).